Consider the following 343-residue polypeptide: Cytoplasmic tRNA 2-thiolation protein 1 (343 aa).

The protein belongs to the TtcA family. CTU1/NCS6/ATPBD3 subfamily.

The protein resides in the cytoplasm. The protein operates within tRNA modification; 5-methoxycarbonylmethyl-2-thiouridine-tRNA biosynthesis. Functionally, plays a central role in 2-thiolation of mcm(5)S(2)U at tRNA wobble positions of tRNA(Lys), tRNA(Glu) and tRNA(Gln). Directly binds tRNAs and probably acts by catalyzing adenylation of tRNAs, an intermediate required for 2-thiolation. It is unclear whether it acts as a sulfurtransferase that transfers sulfur from thiocarboxylated URM1 onto the uridine of tRNAs at wobble position. This Drosophila sechellia (Fruit fly) protein is Cytoplasmic tRNA 2-thiolation protein 1.